The primary structure comprises 282 residues: Phosphatidylglycerol--prolipoprotein diacylglyceryl transferase (282 aa).

3 consecutive transmembrane segments (helical) span residues 18–38 (IQVH…VALA), 56–76 (ILWA…IFQW), and 89–109 (IWDG…VVIL). Arg-137 contributes to the a 1,2-diacyl-sn-glycero-3-phospho-(1'-sn-glycerol) binding site. A helical membrane pass occupies residues 237–257 (VIRVSQALSVVLFFGSIGLMI).

Belongs to the Lgt family.

Its subcellular location is the cell membrane. It carries out the reaction L-cysteinyl-[prolipoprotein] + a 1,2-diacyl-sn-glycero-3-phospho-(1'-sn-glycerol) = an S-1,2-diacyl-sn-glyceryl-L-cysteinyl-[prolipoprotein] + sn-glycerol 1-phosphate + H(+). The protein operates within protein modification; lipoprotein biosynthesis (diacylglyceryl transfer). Functionally, catalyzes the transfer of the diacylglyceryl group from phosphatidylglycerol to the sulfhydryl group of the N-terminal cysteine of a prolipoprotein, the first step in the formation of mature lipoproteins. This is Phosphatidylglycerol--prolipoprotein diacylglyceryl transferase from Lactiplantibacillus plantarum (strain ATCC BAA-793 / NCIMB 8826 / WCFS1) (Lactobacillus plantarum).